A 119-amino-acid chain; its full sequence is uncharacterized protein (119 aa).

A signal peptide spans 1–23 (MVKWAVSILVNALLLIVIDGYID). 3 helical membrane passes run 27–47 (ISSIGAAIIASLILSILNVLI), 50–70 (LLIIFTLPVTMVTLGLFLFVI), and 88–108 (IDGFGTAIWASVILSVFHLLI).

It is found in the cell membrane. This is an uncharacterized protein from Bacillus subtilis (strain 168).